Consider the following 495-residue polypeptide: Syntaphilin (495 aa).

The segment at 1–74 (MAMSLQGSRR…HGIKPPTPEQ (74 aa)) is disordered. Residues 7 to 49 (GSRRASAGSRRRTSPPVSVRDAYGTSSLSSSSNSGSCKGSDSS) are compositionally biased toward low complexity. Residues 79–161 (LQQKEVCIRH…VKNNLIDKDK (83 aa)) are a coiled coil. The disordered stretch occupies residues 191–244 (VAKEEGTGESAGGSPARSLTRSSTYTKLSDPAVCGDRQPGDPSNTSAEDGADSG). A phosphoserine mark is found at S200 and S204. Positions 207–217 (RSLTRSSTYTK) are enriched in polar residues. The residue at position 214 (T214) is a Phosphothreonine. S219 carries the post-translational modification Phosphoserine. A Phosphothreonine modification is found at T235. The chain crosses the membrane as a helical span at residues 427–446 (YIVDLLAVVVPAVPTVAWLC).

Binds to STX1A. Interacts with DNM1; this interaction inhibits the binding of DNM1 to AMPH and DNM1-receptor-mediated endocytosis.

The protein resides in the membrane. It is found in the synapse. The protein localises to the synaptosome. Inhibits SNARE complex formation by absorbing free STX1A. The chain is Syntaphilin from Mus musculus (Mouse).